A 317-amino-acid chain; its full sequence is Glutathione synthetase (317 aa).

One can recognise an ATP-grasp domain in the interval 125–311 (EKMFATLFPQ…IGGKLMDAID (187 aa)). 152–208 (TAKHADVILKPLDGMGGTSIFRHRAGDPNLSVILETLTALGTQQIMAQAYLPAIKDG) serves as a coordination point for ATP. Residues E282 and N284 each contribute to the Mg(2+) site.

Belongs to the prokaryotic GSH synthase family. Requires Mg(2+) as cofactor. It depends on Mn(2+) as a cofactor.

The enzyme catalyses gamma-L-glutamyl-L-cysteine + glycine + ATP = glutathione + ADP + phosphate + H(+). Its pathway is sulfur metabolism; glutathione biosynthesis; glutathione from L-cysteine and L-glutamate: step 2/2. This is Glutathione synthetase from Pseudomonas putida (strain ATCC 47054 / DSM 6125 / CFBP 8728 / NCIMB 11950 / KT2440).